A 393-amino-acid chain; its full sequence is S-adenosylmethionine synthase (393 aa).

H16 contacts ATP. D18 serves as a coordination point for Mg(2+). E44 serves as a coordination point for K(+). Residues E57 and Q100 each coordinate L-methionine. Positions 100–110 (QSPDIVMGVDG) are flexible loop. ATP contacts are provided by residues 165–167 (DAK), 231–232 (RF), D240, 246–247 (RK), and K267. D240 contributes to the L-methionine binding site. K271 is a binding site for L-methionine.

Belongs to the AdoMet synthase family. In terms of assembly, homotetramer; dimer of dimers. It depends on Mg(2+) as a cofactor. K(+) is required as a cofactor.

Its subcellular location is the cytoplasm. The enzyme catalyses L-methionine + ATP + H2O = S-adenosyl-L-methionine + phosphate + diphosphate. Its pathway is amino-acid biosynthesis; S-adenosyl-L-methionine biosynthesis; S-adenosyl-L-methionine from L-methionine: step 1/1. In terms of biological role, catalyzes the formation of S-adenosylmethionine (AdoMet) from methionine and ATP. The overall synthetic reaction is composed of two sequential steps, AdoMet formation and the subsequent tripolyphosphate hydrolysis which occurs prior to release of AdoMet from the enzyme. The protein is S-adenosylmethionine synthase of Coxiella burnetii (strain CbuG_Q212) (Coxiella burnetii (strain Q212)).